The following is an 80-amino-acid chain: MDYADYDKALYYTHRSQWDNLLILMVRTEDDLLSKRIEHFLHAYHFEQDYAVLEKMLYSLLRYIDHATELTYEDQIALLT.

This is an uncharacterized protein from Bacillus subtilis (strain 168).